A 68-amino-acid polypeptide reads, in one-letter code: Large ribosomal subunit protein uL29 (68 aa).

It belongs to the universal ribosomal protein uL29 family.

The chain is Large ribosomal subunit protein uL29 from Limosilactobacillus reuteri (strain DSM 20016) (Lactobacillus reuteri).